The primary structure comprises 328 residues: Glyoxylate reductase/hydroxypyruvate reductase (328 aa).

Position 36 is a phosphoserine (S36). V83–G84 contributes to the substrate binding site. NADP(+) contacts are provided by residues G162–I164, R185–R188, S217, and I243. R245 and D269 together coordinate substrate. A Phosphoserine modification is found at S272. H293 acts as the Proton donor in catalysis. H293–S296 lines the substrate pocket. G295 is an NADP(+) binding site. T298 bears the Phosphothreonine mark.

The protein belongs to the D-isomer specific 2-hydroxyacid dehydrogenase family. As to quaternary structure, homodimer. In terms of tissue distribution, ubiquitous. Most abundantly expressed in the liver.

The enzyme catalyses glycolate + NADP(+) = glyoxylate + NADPH + H(+). It carries out the reaction (R)-glycerate + NAD(+) = 3-hydroxypyruvate + NADH + H(+). The catalysed reaction is (R)-glycerate + NADP(+) = 3-hydroxypyruvate + NADPH + H(+). Enzyme with hydroxy-pyruvate reductase, glyoxylate reductase and D-glycerate dehydrogenase enzymatic activities. Reduces hydroxypyruvate to D-glycerate, glyoxylate to glycolate, oxidizes D-glycerate to hydroxypyruvate. This is Glyoxylate reductase/hydroxypyruvate reductase (GRHPR) from Homo sapiens (Human).